The following is a 279-amino-acid chain: Biotin synthase (279 aa).

Residues 1–227 (MKVYLCAISN…NAMIMVAGGR (227 aa)) form the Radical SAM core domain. The [4Fe-4S] cluster site is built by cysteine 16, cysteine 20, and cysteine 23. [2Fe-2S] cluster-binding residues include cysteine 60, cysteine 95, and cysteine 153.

It belongs to the radical SAM superfamily. Biotin synthase family. In terms of assembly, homodimer. The cofactor is [4Fe-4S] cluster. [2Fe-2S] cluster is required as a cofactor.

The catalysed reaction is (4R,5S)-dethiobiotin + (sulfur carrier)-SH + 2 reduced [2Fe-2S]-[ferredoxin] + 2 S-adenosyl-L-methionine = (sulfur carrier)-H + biotin + 2 5'-deoxyadenosine + 2 L-methionine + 2 oxidized [2Fe-2S]-[ferredoxin]. The protein operates within cofactor biosynthesis; biotin biosynthesis; biotin from 7,8-diaminononanoate: step 2/2. In terms of biological role, catalyzes the conversion of dethiobiotin (DTB) to biotin by the insertion of a sulfur atom into dethiobiotin via a radical-based mechanism. The protein is Biotin synthase of Nitratiruptor sp. (strain SB155-2).